The sequence spans 137 residues: Large ribosomal subunit protein uL16 (137 aa).

The protein belongs to the universal ribosomal protein uL16 family. Part of the 50S ribosomal subunit.

In terms of biological role, binds 23S rRNA and is also seen to make contacts with the A and possibly P site tRNAs. This Chlamydia abortus (strain DSM 27085 / S26/3) (Chlamydophila abortus) protein is Large ribosomal subunit protein uL16.